A 261-amino-acid polypeptide reads, in one-letter code: 5'-nucleotidase SurE (261 aa).

Positions 8, 9, 39, and 91 each coordinate a divalent metal cation.

Belongs to the SurE nucleotidase family. A divalent metal cation serves as cofactor.

Its subcellular location is the cytoplasm. The enzyme catalyses a ribonucleoside 5'-phosphate + H2O = a ribonucleoside + phosphate. Nucleotidase that shows phosphatase activity on nucleoside 5'-monophosphates. This is 5'-nucleotidase SurE from Polaromonas sp. (strain JS666 / ATCC BAA-500).